The primary structure comprises 583 residues: Ferredoxin--nitrite reductase, chloroplastic (583 aa).

The transit peptide at 1 to 22 (MSSLSVRFLSPPLFSSTPAWPR) directs the protein to the chloroplast. Residues C461, C467, C502, and C506 each contribute to the [4Fe-4S] cluster site. Siroheme is bound at residue C506.

Belongs to the nitrite and sulfite reductase 4Fe-4S domain family. In terms of assembly, monomer. The cofactor is siroheme. [4Fe-4S] cluster is required as a cofactor.

The protein resides in the plastid. The protein localises to the chloroplast. It catalyses the reaction 6 oxidized [2Fe-2S]-[ferredoxin] + NH4(+) + 2 H2O = nitrite + 6 reduced [2Fe-2S]-[ferredoxin] + 8 H(+). Its pathway is nitrogen metabolism; nitrate reduction (assimilation). The protein is Ferredoxin--nitrite reductase, chloroplastic (NIR1) of Betula pendula (European white birch).